The chain runs to 236 residues: MIIYPAIDIIDGKCVRLQQGSYSDVTVFGDSPVDMARKWESLGAGYLHVVDLDGARSGKSENAEIIKQIAKTLKIPVQTGGGIRNLETVETYLSGGLSRIILGTSAVSNREMLISALKEYKGKIAVGIDAKDGKVAIHGWEKTSDYTAVEFAKEVESLGAKTIIYTDISRDGMLKGPNLQAMKEMADSVSMDVIASGGVSRLKDIIDLKQTGVSGVIVGKAIYTGNVDLKEAILAI.

The active-site Proton acceptor is the Asp8. Asp129 acts as the Proton donor in catalysis.

This sequence belongs to the HisA/HisF family.

The protein resides in the cytoplasm. It carries out the reaction 1-(5-phospho-beta-D-ribosyl)-5-[(5-phospho-beta-D-ribosylamino)methylideneamino]imidazole-4-carboxamide = 5-[(5-phospho-1-deoxy-D-ribulos-1-ylimino)methylamino]-1-(5-phospho-beta-D-ribosyl)imidazole-4-carboxamide. It functions in the pathway amino-acid biosynthesis; L-histidine biosynthesis; L-histidine from 5-phospho-alpha-D-ribose 1-diphosphate: step 4/9. In Ruminiclostridium cellulolyticum (strain ATCC 35319 / DSM 5812 / JCM 6584 / H10) (Clostridium cellulolyticum), this protein is 1-(5-phosphoribosyl)-5-[(5-phosphoribosylamino)methylideneamino] imidazole-4-carboxamide isomerase.